The chain runs to 242 residues: Biosynthetic peptidoglycan transglycosylase (242 aa).

The chain crosses the membrane as a helical span at residues 12–32 (LLLWLIALSVLLVLLLRWVPP).

It belongs to the glycosyltransferase 51 family.

The protein localises to the cell inner membrane. The enzyme catalyses [GlcNAc-(1-&gt;4)-Mur2Ac(oyl-L-Ala-gamma-D-Glu-L-Lys-D-Ala-D-Ala)](n)-di-trans,octa-cis-undecaprenyl diphosphate + beta-D-GlcNAc-(1-&gt;4)-Mur2Ac(oyl-L-Ala-gamma-D-Glu-L-Lys-D-Ala-D-Ala)-di-trans,octa-cis-undecaprenyl diphosphate = [GlcNAc-(1-&gt;4)-Mur2Ac(oyl-L-Ala-gamma-D-Glu-L-Lys-D-Ala-D-Ala)](n+1)-di-trans,octa-cis-undecaprenyl diphosphate + di-trans,octa-cis-undecaprenyl diphosphate + H(+). Its pathway is cell wall biogenesis; peptidoglycan biosynthesis. Its function is as follows. Peptidoglycan polymerase that catalyzes glycan chain elongation from lipid-linked precursors. This Stutzerimonas stutzeri (strain A1501) (Pseudomonas stutzeri) protein is Biosynthetic peptidoglycan transglycosylase.